A 623-amino-acid polypeptide reads, in one-letter code: Chaperone protein HtpG (623 aa).

The segment at 1 to 336 is a; substrate-binding; sequence MSMKGQETRG…SNDLPLNVSR (336 aa). A b region spans residues 337 to 551; sequence EILQDSRVTQ…ADEMSTQMAK (215 aa). The segment at 552-623 is c; that stretch reads LFAAAGQEAP…IRRMNKLLSA (72 aa).

It belongs to the heat shock protein 90 family. In terms of assembly, homodimer.

Its subcellular location is the cytoplasm. Molecular chaperone. Has ATPase activity. The sequence is that of Chaperone protein HtpG from Serratia proteamaculans (strain 568).